The sequence spans 161 residues: Multiprotein-bridging factor 1 (161 aa).

The interval 1-66 (MADDWDTVTK…RSEAGSGQFL (66 aa)) is disordered. Residues 14–23 (RVGGGGGGGP) are compositionally biased toward gly residues. Polar residues-rich tracts occupy residues 27-36 (TIKNKSQLNA) and 52-65 (TANS…SGQF). In terms of domain architecture, HTH cro/C1-type spans 90–144 (MQNREQKKLGNRLEFGKKVGINEKDLARIEKGEVPITQDQVNRIERGLEMFIRGV). Residues 101-120 (RLEFGKKVGINEKDLARIEK) constitute a DNA-binding region (H-T-H motif).

The protein belongs to the MBF1 family.

Transcriptional coactivator that stimulates GCN4-dependent transcriptional activity by bridging the DNA-binding region of GCN4 and TBP (SPT15), thereby recruiting TBP to GCN4-bound promoters. Involved in induction of the ribosome quality control (RQC) pathway; a pathway that degrades nascent peptide chains during problematic translation. Required to prevent stalled ribosomes from frameshifting. The chain is Multiprotein-bridging factor 1 (MBF1) from Pyricularia oryzae (strain 70-15 / ATCC MYA-4617 / FGSC 8958) (Rice blast fungus).